The following is a 1330-amino-acid chain: MAEPRRVAFISLSPVRRREADFAGAEREPPRLEPQPYREPARAEPAPRADAQPPARDKPLPQREVSRAEPPMALQREPPRPEPPPPPLPLQTPPPRESASRAEPPPRPPKETVRLELVLKDPTDESCVEFSYPELLLCGEQRKKLVHTEDPFTDEHKERQEVEMLAKKFEMKYGGKARKHRKDRLQDLIDIGFGYDETDPFIDNSEAYDELVPASLTTKYGGFYINTGTLQFRQASDTEEDDFTDNQKHKPPKVPKIKDDDIEAKKRKRKEEGEKEKKPRKKVPKQLGVVALNSHKSEKKKKRYKDSLSLAAMIRKFQKEKDALKKESTPKVPVIPSTSSLPKPPCAATTLGDDIPDLSLNSADPDLPIFVSTNEHELFQEAENALEMLDDFDFDRLLDATSDGSPLSESGGENGNTTQPTFASQVVPKVVPTLPDGLPVLLEKRIEDLRVAAKLFDEEGRKKFFTQDMNNILLDIELQLQELGPVIRSGVYSHLEAFVPCNKETLVKRLKKLHLNVQDDRLREPLQKLKLAVSNVMPEQLFKYQEDCQARSQAKCAKLQADEEREKNGSDDDDDEKPGKRVIGPRKKFHWDDTIRTLLCNLVEIKLGCYELEPNKSQSAEDYLKSFMETEVKPLWPKGWMQARMLFKESRSVHNHLTSAPAKKKVIPASKPKVKEVMVKTLPVRSFPTMLKECSPKKDPKAPASVVASGGCPCTSSSTSIVASASSSSTPAQETICLDDSLDEDLSLPSASLDLVSEALAVINNGNKGPSVSSRLNVPTTKPRPGLREEKLASIMSKLPLATPKKLDSPQTAHSSSLIAGHTGPVPKKPQDLAHTGISSGLIAGSSIQNPKVSLEPLPARLLQQGLQRSSQIHASSSQTHVSSSQAQAAASSHALGTSEAQDASSLTQVTKVHQHSAVQQNYVSPLQATISKSQTNPVVKLSNNPQLSCSSQLLKTSEKPLMYRLPLSTPSPGNGSQGSHPLVSRTAPSTTTSSNYLAKAMVSQISTQGFKSPFSMAASPKLAASPKPATSPKPLTSPKPSVSPKPSLSAKPSVSTKLISKSNPTPKPAVCPSSSSPNTLVAQSSHSTSNNPAHKQPSGMNISRQSPTLNLLPSNRTSGLPTTKTLQAPSKLTNSSSAGTVGKNSLSGIPVNVPASRGSNLNSSGANRTSLSGGTGSGTQGATKPLSTPHRPTSASGSSVVTASVQSTAGASLLANASPLTLMTSPLSVTNQTVTPFGMLGGLVPVTMPFQFPLELLGFGTDTAGVTATSGSTSAALHHGLTQNLLKSLQPGTQHAATLPHSPLPTHLQQAFNDGGQSKGDTKLPRKPQ.

Residues 1-113 (MAEPRRVAFI…PPPRPPKETV (113 aa)) form a disordered region. The residue at position 13 (Ser13) is a Phosphoserine. Basic and acidic residues-rich tracts occupy residues 16–31 (RRREADFAGAEREPPR) and 55–67 (ARDKPLPQREVSR). Over residues 81–96 (PEPPPPPLPLQTPPPR) the composition is skewed to pro residues. Thr229 is modified (phosphothreonine). Ser236 is modified (phosphoserine). 2 disordered regions span residues 236–304 (SDTE…KKRY) and 322–345 (DALKKESTPKVPVIPSTSSLPKPP). Position 238 is a phosphothreonine (Thr238). Residue Lys258 forms a Glycyl lysine isopeptide (Lys-Gly) (interchain with G-Cter in SUMO2) linkage. Ser297 is subject to Phosphoserine. 4 positions are modified to phosphoserine: Ser402, Ser405, Ser408, and Ser570. Disordered stretches follow at residues 559–583 (LQADEEREKNGSDDDDDEKPGKRVI), 767–789 (NKGPSVSSRLNVPTTKPRPGLRE), 801–835 (LATPKKLDSPQTAHSSSLIAGHTGPVPKKPQDLAH), 866–909 (GLQR…SLTQ), 964–991 (YRLPLSTPSPGNGSQGSHPLVSRTAPST), 1021–1202 (PKLA…SSVV), and 1292–1330 (PGTQHAATLPHSPLPTHLQQAFNDGGQSKGDTKLPRKPQ). Over residues 560–570 (QADEEREKNGS) the composition is skewed to basic and acidic residues. 2 stretches are compositionally biased toward polar residues: residues 767–780 (NKGPSVSSRLNVPT) and 809–818 (SPQTAHSSSL). The segment covering 866–895 (GLQRSSQIHASSSQTHVSSSQAQAAASSHA) has biased composition (low complexity). 2 stretches are compositionally biased toward polar residues: residues 899 to 909 (SEAQDASSLTQ) and 969 to 980 (STPSPGNGSQGS). The span at 1030 to 1044 (ATSPKPLTSPKPSVS) shows a compositional bias: pro residues. Positions 1045 to 1056 (PKPSLSAKPSVS) are enriched in low complexity. An N6-acetyllysine modification is found at Lys1052. 3 stretches are compositionally biased toward polar residues: residues 1073–1148 (PSSS…NSLS), 1158–1169 (RGSNLNSSGANR), and 1308–1317 (HLQQAFNDGG). Position 1107 is a phosphoserine (Ser1107). Lys1132 bears the N6-acetyllysine mark. The segment covering 1321-1330 (GDTKLPRKPQ) has biased composition (basic and acidic residues).

Belongs to the ubinuclein family.

The protein is Ubinuclein-2 (Ubn2) of Rattus norvegicus (Rat).